Consider the following 370-residue polypeptide: 3-dehydroquinate synthase (370 aa).

NAD(+) contacts are provided by residues 107-111 (GVIGD), 131-132 (TS), lysine 144, and lysine 153. Zn(2+)-binding residues include glutamate 186, histidine 249, and histidine 267.

This sequence belongs to the sugar phosphate cyclases superfamily. Dehydroquinate synthase family. Co(2+) is required as a cofactor. It depends on Zn(2+) as a cofactor. Requires NAD(+) as cofactor.

It localises to the cytoplasm. The enzyme catalyses 7-phospho-2-dehydro-3-deoxy-D-arabino-heptonate = 3-dehydroquinate + phosphate. It participates in metabolic intermediate biosynthesis; chorismate biosynthesis; chorismate from D-erythrose 4-phosphate and phosphoenolpyruvate: step 2/7. Functionally, catalyzes the conversion of 3-deoxy-D-arabino-heptulosonate 7-phosphate (DAHP) to dehydroquinate (DHQ). This is 3-dehydroquinate synthase from Jannaschia sp. (strain CCS1).